The sequence spans 307 residues: Plastid division protein PDV2 (307 aa).

Methionine 1 bears the N-acetylmethionine mark. The Cytoplasmic portion of the chain corresponds to 1 to 213 (MEDEEGIGLI…SGGSSHGVIR (213 aa)). The interval 28-66 (SSTTVSDNGDGNEDLSPGEGRKSEIIGNQDKDFDSISSE) is disordered. A compositionally biased stretch (basic and acidic residues) spans 46–61 (EGRKSEIIGNQDKDFD). A Phosphoserine modification is found at serine 50. The stretch at 76–103 (LLRIRDALEALESQLASLQNLRQRQQYE) forms a coiled coil. The interval 174-206 (HLPSKKKSDANGFGSGHVRNEAEAKSPNGGSGG) is disordered. Residues 214 to 234 (FLGSVAKIVLPIIGVISLLSA) form a helical membrane-spanning segment. Residues 235–307 (SGYGPEMRKR…AKRDVTYGYG (73 aa)) lie on the Chloroplast intermembrane side of the membrane. An ARC6 binding region spans residues 235 to 307 (SGYGPEMRKR…AKRDVTYGYG (73 aa)).

Interacts (via C-terminus) with ARC6 (via C-terminus) in the chloroplast intermembrane space; this interaction induces ARC6 homodimerization and leads to the formation of a heterotetramer containing two ARC6 and two PDV2 subunits. Interacts with ARC5/DRP5B. As to expression, mostly expressed in young leaves.

Its subcellular location is the plastid. It is found in the chloroplast outer membrane. In terms of biological role, component of the plastid division machinery consisting in a binary fission accomplished by the simultaneous constriction of the FtsZ ring on the stromal side of the inner envelope membrane, and the ARC5/DRP5B ring on the cytosolic side of the outer envelope membrane. Positive factor of chloroplast division required, with a dosage effect, to mediate the recruitment and dimerization of ARC5/DRP5B at the midplastid constriction site in the cytoplasm at plastid outer envelope membranes (OEMs). Prevents ARC5/DRP5B GTPase acrivity. Relays plastid division site position between stroma and outer surface via interactions with the cytoplasmic ARC5/DRP5B and the inner membrane ARC6 that recruits stromal FtsZ ring. Binding to phosphatidylinositol 4-phosphate (PI4P) modulates negatively chloroplast division. The protein is Plastid division protein PDV2 of Arabidopsis thaliana (Mouse-ear cress).